The following is a 472-amino-acid chain: Eukaryotic translation initiation factor 2 subunit 3 (472 aa).

A tr-type G domain is found at 39–247 (QATINIGTIG…YIVNKIPVPV (209 aa)). Residues 48–55 (GHVAHGKS) are G1. 51 to 56 (AHGKST) is a GTP binding site. Residues 76–80 (NITIK) are G2. The interval 134 to 137 (DCPG) is G3. GTP contacts are provided by residues 190–193 (NKID) and 225–227 (SAQ). Residues 190–193 (NKID) are G4. Positions 225–227 (SAQ) are G5. Residues 457–469 (GQIRRGVTITPTV) form an interacts with cdc123 region.

The protein belongs to the TRAFAC class translation factor GTPase superfamily. Classic translation factor GTPase family. EIF2G subfamily. Eukaryotic translation initiation factor 2 eIF2 is a heterotrimeric complex composed of an alpha (EIF2S1), a beta (EIF2S2) and a gamma (EIF2S3) chain. eIF2 is member of the 43S pre-initiation complex (43S PIC).

Its subcellular location is the cytoplasm. It localises to the cytosol. It catalyses the reaction GTP + H2O = GDP + phosphate + H(+). In terms of biological role, member of the eIF2 complex that functions in the early steps of protein synthesis by forming a ternary complex with GTP and initiator tRNA. This complex binds to a 40S ribosomal subunit, followed by mRNA binding to form the 43S pre-initiation complex (43S PIC). Junction of the 60S ribosomal subunit to form the 80S initiation complex is preceded by hydrolysis of the GTP bound to eIF2 and release of an eIF2-GDP binary complex. In order for eIF2 to recycle and catalyze another round of initiation, the GDP bound to eIF2 must exchange with GTP by way of a reaction catalyzed by eIF-2B. This Danio rerio (Zebrafish) protein is Eukaryotic translation initiation factor 2 subunit 3.